The sequence spans 35 residues: Pheromone-binding protein (35 aa).

This sequence belongs to the PBP/GOBP family. Antenna.

In terms of biological role, this major soluble protein in olfactory sensilla of male moths might serve to solubilize the extremely hydrophobic pheromone molecules and to transport pheromone through the aqueous lymph to receptors located on olfactory cilia. The protein is Pheromone-binding protein of Hyalophora cecropia (Cecropia moth).